We begin with the raw amino-acid sequence, 561 residues long: MAVYVNSTTGPPPSVGRNSAGFHPSIWGDKFITSSNSAVQKTDVDRKEEEKLQLLKQEVKKMLTAGDTSQQDLICLIDDIQRLGLSYHFEAEIDTLLQHVKHSYVEHYGKKNHDNLHDVALSFRLLRQEGHNISSDVFSKFQDSDGKFKEELVEDVRGMLSLFEAAHLRVHGENILEDALEFTTTHLNSYLNSNPSSSLADLVRRALKYPLRKSFNRMVARHYISVYHKFDWHKQVLLDMAKCDFNLVQKVHQNELGYITRWWKDLDFTNKLPFARDRVVECYFWITGVYFEPRYAAPRKFLTEVMSLTSIIDDIYDVYGTPDELVQLADAIDKWDISILDQLPEYVRHAYKPLLDTFAEAEEEMANEGLPTYGVDYAKEAFKRLAVAYLQETKWLQAQYIPTFEEYLSVALVSAGGNMLSVSSFVRMGNIATREAFEWLSKDPLIANGLSVIIRLSDDIVGHEFESQRPHIPSAVECYMKSHDVTKETAYAELQKPIIKAWKDMNEGCLHPEAPPKPLLERVLNLARVLNFLYDGHDGYTHSSTRTKDIITTAFINPIPL.

Asp-313, Asp-317, Asp-458, and Glu-466 together coordinate Mg(2+). The DDXXD motif motif lies at 313 to 317; sequence DDIYD.

This sequence belongs to the terpene synthase family. Tpsa subfamily. Mn(2+) serves as cofactor. Mg(2+) is required as a cofactor.

The protein localises to the cytoplasm. It catalyses the reaction (2E,6E)-farnesyl diphosphate = (1S,8aR)-delta-cadinene + diphosphate. The protein operates within secondary metabolite biosynthesis; terpenoid biosynthesis. In terms of biological role, involved in the biosynthesis of delta-cadinene. This Thapsia garganica (Deadly carrot) protein is Sesquiterpene synthase 1 (STS1).